Here is a 154-residue protein sequence, read N- to C-terminus: Myoglobin (154 aa).

Residues 2-148 form the Globin domain; that stretch reads GLSDGEWQLV…FRHDMAAKYK (147 aa). Serine 4 bears the Phosphoserine mark. Histidine 65 contributes to the nitrite binding site. O2 is bound at residue histidine 65. A Phosphothreonine modification is found at threonine 68. Histidine 94 is a heme b binding site.

It belongs to the globin family. In terms of assembly, monomeric.

It is found in the cytoplasm. Its subcellular location is the sarcoplasm. The catalysed reaction is Fe(III)-heme b-[protein] + nitric oxide + H2O = Fe(II)-heme b-[protein] + nitrite + 2 H(+). The enzyme catalyses H2O2 + AH2 = A + 2 H2O. In terms of biological role, monomeric heme protein which primary function is to store oxygen and facilitate its diffusion within muscle tissues. Reversibly binds oxygen through a pentacoordinated heme iron and enables its timely and efficient release as needed during periods of heightened demand. Depending on the oxidative conditions of tissues and cells, and in addition to its ability to bind oxygen, it also has a nitrite reductase activity whereby it regulates the production of bioactive nitric oxide. Under stress conditions, like hypoxia and anoxia, it also protects cells against reactive oxygen species thanks to its pseudoperoxidase activity. The polypeptide is Myoglobin (MB) (Osphranter rufus (Red kangaroo)).